Reading from the N-terminus, the 220-residue chain is tRNA (guanine-N(7)-)-methyltransferase (220 aa).

S-adenosyl-L-methionine-binding residues include Glu46, Asp71, Asp100, and Asp122. Residue Asp122 is part of the active site. Substrate-binding positions include Lys126, Asp158, and 196-199; that span reads TEYE.

This sequence belongs to the class I-like SAM-binding methyltransferase superfamily. TrmB family.

It catalyses the reaction guanosine(46) in tRNA + S-adenosyl-L-methionine = N(7)-methylguanosine(46) in tRNA + S-adenosyl-L-homocysteine. It functions in the pathway tRNA modification; N(7)-methylguanine-tRNA biosynthesis. In terms of biological role, catalyzes the formation of N(7)-methylguanine at position 46 (m7G46) in tRNA. This is tRNA (guanine-N(7)-)-methyltransferase from Malacoplasma penetrans (strain HF-2) (Mycoplasma penetrans).